The sequence spans 339 residues: NADH-quinone oxidoreductase subunit H (339 aa).

Helical transmembrane passes span 9–29 (IFPL…LILC), 50–70 (PNVV…KLLF), 82–102 (ILFV…WAVI), 115–135 (VGVL…IIAG), 161–181 (MGLV…SQIV), 187–207 (MPWW…ISVL), 235–255 (MGFA…SAMT), 275–295 (IPGF…FLWI), and 311–331 (GWKV…SVLI).

Belongs to the complex I subunit 1 family. NDH-1 is composed of 14 different subunits. Subunits NuoA, H, J, K, L, M, N constitute the membrane sector of the complex.

Its subcellular location is the cell inner membrane. The catalysed reaction is a quinone + NADH + 5 H(+)(in) = a quinol + NAD(+) + 4 H(+)(out). NDH-1 shuttles electrons from NADH, via FMN and iron-sulfur (Fe-S) centers, to quinones in the respiratory chain. The immediate electron acceptor for the enzyme in this species is believed to be ubiquinone. Couples the redox reaction to proton translocation (for every two electrons transferred, four hydrogen ions are translocated across the cytoplasmic membrane), and thus conserves the redox energy in a proton gradient. This subunit may bind ubiquinone. This Rickettsia bellii (strain RML369-C) protein is NADH-quinone oxidoreductase subunit H.